Reading from the N-terminus, the 170-residue chain is Small ribosomal subunit protein uS13m (170 aa).

The segment at 130–170 (LKKKPTNRKERRIFNKIKKLQDKHNKQQQKNKKSKKWKTKK) is disordered. Composition is skewed to basic residues over residues 132 to 147 (KKPT…NKIK) and 155 to 170 (KQQQ…KTKK).

Belongs to the universal ribosomal protein uS13 family. As to quaternary structure, part of the small ribosomal subunit.

Its subcellular location is the mitochondrion. In terms of biological role, located at the top of the head of the small subunit, it contacts several helices of the small subunit rRNA. This chain is Small ribosomal subunit protein uS13m (mrps13), found in Dictyostelium citrinum (Slime mold).